The primary structure comprises 364 residues: Medium-wave-sensitive opsin 1 (364 aa).

Residues Met-1–Val-52 lie on the Extracellular side of the membrane. The tract at residues Asp-17 to Pro-43 is required for 11-cis-retinal regeneration. N-linked (GlcNAc...) asparagine glycosylation occurs at Asn-34. Residues Tyr-53–Ala-77 form a helical membrane-spanning segment. Residues Thr-78–Asn-89 lie on the Cytoplasmic side of the membrane. A helical transmembrane segment spans residues Trp-90–Val-115. The Extracellular segment spans residues Tyr-116–Glu-129. A disulfide bridge connects residues Cys-126 and Cys-203. The helical transmembrane segment at Gly-130 to Trp-149 threads the bilayer. Residues Glu-150–Leu-168 are Cytoplasmic-facing. The helical transmembrane segment at Ala-169 to Ser-192 threads the bilayer. Residues Arg-193–Ser-218 are Extracellular-facing. The helical transmembrane segment at Tyr-219–Ile-246 threads the bilayer. The Cytoplasmic portion of the chain corresponds to Arg-247–Arg-268. A helical membrane pass occupies residues Met-269 to Thr-292. Topologically, residues Ala-293–His-300 are extracellular. A helical membrane pass occupies residues Pro-301–Met-325. Lys-312 bears the N6-(retinylidene)lysine mark. At Asn-326–Ala-364 the chain is on the cytoplasmic side.

It belongs to the G-protein coupled receptor 1 family. Opsin subfamily. As to quaternary structure, monomer. Homodimer. Homotetramer. In terms of processing, O-glycosylated. Post-translationally, phosphorylated on some or all of the serine and threonine residues present in the C-terminal region. As to expression, expressed in cone photoreceptor cells.

Its subcellular location is the membrane. Functionally, visual pigments are the light-absorbing molecules that mediate vision. They consist of an apoprotein, opsin, covalently linked to cis-retinal. May increase spectral sensitivity in dim light. The sequence is that of Medium-wave-sensitive opsin 1 (OPN1MW) from Cavia porcellus (Guinea pig).